The primary structure comprises 677 residues: Methionine--tRNA ligase (677 aa).

The short motif at 15–25 (PYANGSIHLGH) is the 'HIGH' region element. Zn(2+)-binding residues include Cys-146, Cys-149, Cys-159, and Cys-162. The short motif at 333–337 (KMSKS) is the 'KMSKS' region element. Position 336 (Lys-336) interacts with ATP. The tRNA-binding domain maps to 575–677 (DFAKVDLRVA…AGAKPGHQVK (103 aa)).

Belongs to the class-I aminoacyl-tRNA synthetase family. MetG type 1 subfamily. In terms of assembly, homodimer. It depends on Zn(2+) as a cofactor.

It is found in the cytoplasm. It catalyses the reaction tRNA(Met) + L-methionine + ATP = L-methionyl-tRNA(Met) + AMP + diphosphate. In terms of biological role, is required not only for elongation of protein synthesis but also for the initiation of all mRNA translation through initiator tRNA(fMet) aminoacylation. In Escherichia coli (strain UTI89 / UPEC), this protein is Methionine--tRNA ligase.